The primary structure comprises 320 residues: FHA domain-containing protein FHA2 (320 aa).

N-acetylalanine is present on Ala2. One can recognise an FHA domain in the interval 32–89 (IILGRNSKKATVDVDLSSLGGGMNISRNHARIFYDFTRRRFSLEVLGKNGCLVEGVLH). Residues 138–211 (VPYHNYQSGP…REGRSKVDRE (74 aa)) form a disordered region. Residues 163 to 178 (EYDDEDDDDDDDEEDD) are compositionally biased toward acidic residues. Over residues 198–210 (GEKKREGRSKVDR) the composition is skewed to basic and acidic residues.

In terms of tissue distribution, widely expressed.

Its subcellular location is the nucleus. Its function is as follows. May play a role in the control of plant organ development and specifically in the regulation of stamen development. Does not show transactivation activity in yeast. The protein is FHA domain-containing protein FHA2 of Arabidopsis thaliana (Mouse-ear cress).